A 565-amino-acid polypeptide reads, in one-letter code: Probable protease Gilli_2517 (565 aa).

In terms of biological role, probably a dedicated protease for substrate gasdermin bGSDM; cleaves the bGSDM precursor, releasing the pore-forming moiety, which integrates into the membrane and triggers cell death. Involved in defense against bacteriophages. Expression of bGSDM and this neighboring protease is not toxic in E.coli. This is Probable protease Gilli_2517 from Gillisia limnaea (strain DSM 15749 / LMG 21470 / R-8282).